Consider the following 157-residue polypeptide: Small ribosomal subunit protein uS7 (157 aa).

The protein belongs to the universal ribosomal protein uS7 family. In terms of assembly, part of the 30S ribosomal subunit. Contacts proteins S9 and S11.

Its function is as follows. One of the primary rRNA binding proteins, it binds directly to 16S rRNA where it nucleates assembly of the head domain of the 30S subunit. Is located at the subunit interface close to the decoding center, probably blocks exit of the E-site tRNA. The sequence is that of Small ribosomal subunit protein uS7 from Psychrobacter cryohalolentis (strain ATCC BAA-1226 / DSM 17306 / VKM B-2378 / K5).